The following is a 338-amino-acid chain: Large ribosomal subunit protein uL3 (338 aa).

Residues 228–237 are compositionally biased toward basic residues; that stretch reads HKHRKGHRRT. Positions 228–255 are disordered; the sequence is HKHRKGHRRTGTIGPQAPALMFTQPRPG.

This sequence belongs to the universal ribosomal protein uL3 family. Part of the 50S ribosomal subunit. Forms a cluster with proteins L14 and L24e.

One of the primary rRNA binding proteins, it binds directly near the 3'-end of the 23S rRNA, where it nucleates assembly of the 50S subunit. In Pyrobaculum calidifontis (strain DSM 21063 / JCM 11548 / VA1), this protein is Large ribosomal subunit protein uL3.